We begin with the raw amino-acid sequence, 1089 residues long: Translocase of chloroplast 120, chloroplastic (1089 aa).

The residue at position 2 (G2) is an N-acetylglycine. Disordered stretches follow at residues 158–179, 255–339, and 353–381; these read ATED…GVVS, TLSP…GLGR, and QPRV…EHDE. The segment covering 165-176 has biased composition (polar residues); it reads ENGNTHSSSENG. A phosphoserine mark is found at S179, S263, and S283. Positions 300-312 are enriched in basic and acidic residues; the sequence is EIKESQHMERESE. Low complexity predominate over residues 327–339; it reads AALPPARPAGLGR. Polar residues predominate over residues 353–374; it reads QPRVNGNVSHNQPQQAEDSTTA. Residues 454–683 form the AIG1-type G domain; sequence DFSCTIMVLG…KLQDNIPGGQ (230 aa). Positions 463–470 are G1; the sequence is GKSGVGKS. Residues 466 to 471 and 485 to 490 each bind GTP; these read GVGKSA and DAFQVG. S470 is a binding site for Mg(2+). A homodimerization region spans residues 485–488; sequence DAFQ. The G2 stretch occupies residues 489–493; that stretch reads VGTKK. Residues 510–513 are G3; that stretch reads DTPG. The tract at residues 548-553 is homodimerization; that stretch reads RLDMQS. Residues 582–585 form a G4 region; that stretch reads THAA. GTP contacts are provided by residues H583 and 631-632; that span reads EN. The segment at 631–633 is G5; sequence ENH. The segment at 710–748 is disordered; the sequence is PEQQYDDEDDEDDLDESSDSEEESEYDELPPFKRLTKAE. Residues 713–737 are compositionally biased toward acidic residues; sequence QYDDEDDEDDLDESSDSEEESEYDE. The stretch at 767 to 788 forms a coiled coil; the sequence is REKLFMKRQMKEERKRRKLLKK. The helical transmembrane segment at 1064–1080 threads the bilayer; sequence LAVVALVPLFKKLLTYY.

This sequence belongs to the TRAFAC class TrmE-Era-EngA-EngB-Septin-like GTPase superfamily. AIG1/Toc34/Toc159-like paraseptin GTPase family. TOC159 subfamily. Homodimer. Part of the TOC core complex that includes 1 protein for the specific recognition of transit peptides surrounded by a ring composed of four proteins forming translocation channels, and four to five GTP-binding proteins providing energy. This core complex can interact with components of the TIC complex to form a larger import complex. Chloroplastic protein precursor such as prSS (precursor of the RuBisCO small subunit) interacts with these complexes. The TOC complex contains a specific subset of polar lipids such as digalactosyldiacylglyceride (DGDG), phosphatidylcholine (PC) and phosphatidylglycerol (PG). Requires Mg(2+) as cofactor. Post-translationally, phosphorylated by KOC1. As to expression, expressed in seedlings, flowers, and roots.

The protein resides in the plastid. It is found in the chloroplast outer membrane. The protein localises to the cytoplasm. GTPase involved in protein precursor import into chloroplasts. Seems to recognize chloroplast-destined precursor proteins and regulate their presentation to the translocation channel through GTP hydrolysis. Probably specialized in the import of nuclear encoded non-photosynthetic preproteins from the cytoplasm to the chloroplast. In Arabidopsis thaliana (Mouse-ear cress), this protein is Translocase of chloroplast 120, chloroplastic.